Reading from the N-terminus, the 212-residue chain is Nucleoside diphosphate kinase homolog 5 (212 aa).

The NDK stretch occupies residues 13–145; the sequence is EKTLAIIKPD…EREIRFMFPE (133 aa).

It belongs to the NDK family. Component of the axonemal radial spoke complex 1 (RS1), at least composed of spoke head proteins RSPH1, RSPH3, RSPH9 and the cilia-specific component RSPH4A or sperm-specific component RSPH6A, spoke stalk proteins RSPH14, DNAJB13, DYDC1, ROPN1L and NME5, and the anchor protein IQUB. Interacts with IQUB. Specifically expressed in testis germinal cells.

The protein resides in the cell projection. The protein localises to the cilium. Its subcellular location is the cytoplasm. It is found in the cytoskeleton. It localises to the flagellum axoneme. Functionally, functions as part of axonemal radial spoke complexes that play an important part in the motility of sperm and cilia. Does not seem to have nucleoside diphosphate kinase (NDPK) activity. Confers protection from cell death by BAX and alters the cellular levels of several antioxidant enzymes including GPX5. May play a role in spermiogenesis by increasing the ability of late-stage spermatids to eliminate reactive oxygen species. Exhibits a 3'-5' exonuclease activity with a preference for single-stranded DNA, suggesting roles in DNA proofreading and repair. This chain is Nucleoside diphosphate kinase homolog 5, found in Homo sapiens (Human).